The sequence spans 132 residues: Small ribosomal subunit protein uS9 (132 aa).

Belongs to the universal ribosomal protein uS9 family.

The sequence is that of Small ribosomal subunit protein uS9 from Leptospira interrogans serogroup Icterohaemorrhagiae serovar copenhageni (strain Fiocruz L1-130).